The following is a 165-amino-acid chain: Type II secretion system protein M (165 aa).

The Cytoplasmic segment spans residues 1–22 (MKELLAPVQAWWRSVTPREQKM). Residues 23-43 (VMGMGALTVLAIAYWGIWQPL) traverse the membrane as a helical segment. The Periplasmic portion of the chain corresponds to 44-165 (SERTAQAQAR…VKRLQLKRGG (122 aa)).

The protein belongs to the GSP M family. In terms of assembly, type II secretion system is composed of four main components: the outer membrane complex, the inner membrane complex, the cytoplasmic secretion ATPase and the periplasm-spanning pseudopilus. Forms homodimers. Interacts with EpsL/GspL. Interacts with EpsE/GspE. Interacts with EpsF/GspF.

It localises to the cell inner membrane. In terms of biological role, inner membrane component of the type II secretion system required for the energy-dependent secretion of extracellular factors such as proteases and toxins from the periplasm. Plays a role in the complex assembly and recruits EpsL resulting in a stable complex in the inner membrane. Provides thus a link between the energy-providing EpsE protein in the cytoplasm and the rest of the T2SS machinery. This is Type II secretion system protein M (epsM) from Vibrio cholerae serotype O1 (strain ATCC 39315 / El Tor Inaba N16961).